Consider the following 117-residue polypeptide: Immunoglobulin heavy variable 1-3 (117 aa).

The N-terminal stretch at 1 to 19 (MDWTWRILFLVAAATGAHS) is a signal peptide. The interval 20–44 (QVQLVQSGAEVKKPGASVKVSCKAS) is framework-1. The region spanning 20 to 117 (QVQLVQSGAE…EDTAVYYCAR (98 aa)) is the Ig-like domain. A disulfide bond links C41 and C115. A complementarity-determining-1 region spans residues 45 to 52 (GYTFTSYA). The tract at residues 53 to 69 (MHWVRQAPGQRLEWMGW) is framework-2. The segment at 70–77 (INAGNGNT) is complementarity-determining-2. Positions 78–115 (KYSQKFQGRVTITRDTSASTAYMELSSLRSEDTAVYYC) are framework-3. The tract at residues 116–117 (AR) is complementarity-determining-3.

As to quaternary structure, immunoglobulins are composed of two identical heavy chains and two identical light chains; disulfide-linked.

Its subcellular location is the secreted. The protein localises to the cell membrane. Its function is as follows. V region of the variable domain of immunoglobulin heavy chains that participates in the antigen recognition. Immunoglobulins, also known as antibodies, are membrane-bound or secreted glycoproteins produced by B lymphocytes. In the recognition phase of humoral immunity, the membrane-bound immunoglobulins serve as receptors which, upon binding of a specific antigen, trigger the clonal expansion and differentiation of B lymphocytes into immunoglobulins-secreting plasma cells. Secreted immunoglobulins mediate the effector phase of humoral immunity, which results in the elimination of bound antigens. The antigen binding site is formed by the variable domain of one heavy chain, together with that of its associated light chain. Thus, each immunoglobulin has two antigen binding sites with remarkable affinity for a particular antigen. The variable domains are assembled by a process called V-(D)-J rearrangement and can then be subjected to somatic hypermutations which, after exposure to antigen and selection, allow affinity maturation for a particular antigen. This chain is Immunoglobulin heavy variable 1-3, found in Homo sapiens (Human).